Reading from the N-terminus, the 472-residue chain is 3-isopropylmalate dehydratase large subunit (472 aa).

3 residues coordinate [4Fe-4S] cluster: cysteine 353, cysteine 414, and cysteine 417.

It belongs to the aconitase/IPM isomerase family. LeuC type 1 subfamily. As to quaternary structure, heterodimer of LeuC and LeuD. [4Fe-4S] cluster is required as a cofactor.

The enzyme catalyses (2R,3S)-3-isopropylmalate = (2S)-2-isopropylmalate. The protein operates within amino-acid biosynthesis; L-leucine biosynthesis; L-leucine from 3-methyl-2-oxobutanoate: step 2/4. Functionally, catalyzes the isomerization between 2-isopropylmalate and 3-isopropylmalate, via the formation of 2-isopropylmaleate. This is 3-isopropylmalate dehydratase large subunit from Acinetobacter baumannii (strain AB307-0294).